We begin with the raw amino-acid sequence, 688 residues long: MAKNFLIELGTEELPPKALRSLAEAFAANFEAGLKAAGLAHQGIKWYATPRRLALKIAELDEGQADKIVEKRGPAIASAFDADGNPTKAAQGWARGNGITVEQAERLKTDKGEWLLHKEEVKGQPVKGLVVELAAKALAGLPIPKAMRWGNSDIQFIRPVKTLTILLGDELIEGTILGVASTRTIRGHRFMGESEFTIDSADQYPAILEERGKVMADYDARKAIILAGAKKAAEAVGGIADLEDELVEEVTSLVEWPVVLTAKFEQEFLNVPSEALVYTMKGDQKYFPVYDQEKNLLPNFIFVTNIESKEPRHIIEGNEKVVRPRLADAEFFFNTDRKRPLIDRLPELEQAIFQKQLGTIKDKTDRITELAGYIAEQIGADVEKSQRAGLLAKCDLMTSMVFEFTDTQGVMGMHYATHDGEDAQVALALYEQYMPRFAGDDLPSTDVSASVAMADKLDTLVGIFGIGQAPKGSDPFALRRAALGILRIIVEKGYNLDLVDLVAKAQSLFGDKLTNANVDTDVIDFMLGRFRAWYQDEGFSVDIIQAVLARRPTKPADFDQRVKAVSHFRELDAAESLAAANKRVGNILAKFDGELAQEIDLALLQEDAEKVLAEKVEILAEALEPVFIAGNYQEALSRLAELREPVDAFFDGVMVMADDEALKLNRLTLLNKLRNLFLDIADISLLQK.

Belongs to the class-II aminoacyl-tRNA synthetase family. In terms of assembly, tetramer of two alpha and two beta subunits.

The protein localises to the cytoplasm. It catalyses the reaction tRNA(Gly) + glycine + ATP = glycyl-tRNA(Gly) + AMP + diphosphate. This chain is Glycine--tRNA ligase beta subunit, found in Aliivibrio salmonicida (strain LFI1238) (Vibrio salmonicida (strain LFI1238)).